Reading from the N-terminus, the 359-residue chain is MAEHGAHITTASVVDDQPSIFEVVAQDSLMSAVRPALQHVVKVLAESNPAHFGFFWRWFDEIFTLLDLLLQQHYLSKTSASFSENFYGLKRIVMGDQHKLQRLANAGLPKQQFMKSIMFLVLLPYLKVKLEKLVSSLREEDEYSIHPPSSRWKRFYRAFLAAYPFVNMAWEGWFLVQQLRYILGKAQHHSPLLRLAGVRLGRLTVQDIQALEHKPAEASMMQLPAGSIGEKIKSALKKAVGGVALSLSTGLSVGVFFLQFLEWWYSSENQETIKSLTALPTPPPPVHLDYNSDSPLLPKMKTVCPLCRKNRVNDTVLATSGYVFCYRCVFHYVRSHQACPITGYPTEVQHLIKLYSPEN.

At 1–19 (MAEHGAHITTASVVDDQPS) the chain is on the peroxisomal matrix side. Residues 20–47 (IFEVVAQDSLMSAVRPALQHVVKVLAES) form a helical membrane-spanning segment. Residues 48–51 (NPAH) are Cytoplasmic-facing. A helical transmembrane segment spans residues 52-76 (FGFFWRWFDEIFTLLDLLLQQHYLS). The Peroxisomal matrix portion of the chain corresponds to 77–109 (KTSASFSENFYGLKRIVMGDQHKLQRLANAGLP). A helical transmembrane segment spans residues 110-139 (KQQFMKSIMFLVLLPYLKVKLEKLVSSLRE). Over 140-144 (EDEYS) the chain is Cytoplasmic. Residues 145 to 183 (IHPPSSRWKRFYRAFLAAYPFVNMAWEGWFLVQQLRYIL) traverse the membrane as a helical segment. The Peroxisomal matrix segment spans residues 184 to 249 (GKAQHHSPLL…VGGVALSLST (66 aa)). The chain crosses the membrane as a helical span at residues 250–277 (GLSVGVFFLQFLEWWYSSENQETIKSLT). At 278–359 (ALPTPPPPVH…HLIKLYSPEN (82 aa)) the chain is on the cytoplasmic side. The Zn(2+) site is built by cysteine 304, cysteine 307, cysteine 325, and cysteine 328. The RING-type; degenerate zinc-finger motif lies at 304-343 (CPLCRKNRVNDTVLATSGYVFCYRCVFHYVRSHQACPITG).

Belongs to the pex2/pex10/pex12 family. In terms of assembly, component of the PEX2-PEX10-PEX12 retrotranslocation channel, composed of PEX2, PEX10 and PEX12. Interacts with PEX19 via its cytoplasmic domain.

It is found in the peroxisome membrane. Its pathway is protein modification; protein ubiquitination. In terms of biological role, component of a retrotranslocation channel required for peroxisome organization by mediating export of the PEX5 receptor from peroxisomes to the cytosol, thereby promoting PEX5 recycling. The retrotranslocation channel is composed of PEX2, PEX10 and PEX12; each subunit contributing transmembrane segments that coassemble into an open channel that specifically allows the passage of PEX5 through the peroxisomal membrane. PEX12 also regulates PEX5 recycling by activating the E3 ubiquitin-protein ligase activity of PEX10. When PEX5 recycling is compromised, PEX12 stimulates PEX10-mediated polyubiquitination of PEX5, leading to its subsequent degradation. The protein is Peroxisome assembly protein 12 (PEX12) of Bos taurus (Bovine).